The following is a 515-amino-acid chain: Proline--tRNA ligase (515 aa).

The protein belongs to the class-II aminoacyl-tRNA synthetase family. ProS type 3 subfamily. As to quaternary structure, homodimer.

Its subcellular location is the cytoplasm. The catalysed reaction is tRNA(Pro) + L-proline + ATP = L-prolyl-tRNA(Pro) + AMP + diphosphate. In terms of biological role, catalyzes the attachment of proline to tRNA(Pro) in a two-step reaction: proline is first activated by ATP to form Pro-AMP and then transferred to the acceptor end of tRNA(Pro). The polypeptide is Proline--tRNA ligase (Novosphingobium aromaticivorans (strain ATCC 700278 / DSM 12444 / CCUG 56034 / CIP 105152 / NBRC 16084 / F199)).